Reading from the N-terminus, the 513-residue chain is Steroid (22S)-hydroxylase (513 aa).

The helical transmembrane segment at threonine 8–leucine 28 threads the bilayer. Residues aspartate 252–valine 277 form a disordered region. Positions lysine 254–alanine 269 are enriched in acidic residues. Cysteine 462 provides a ligand contact to heme.

The protein belongs to the cytochrome P450 family. Heme serves as cofactor. As to expression, expressed in stems, leaves, shoots, and roots, with a higher expression in siliques and apical shoots.

The protein resides in the membrane. It catalyses the reaction a C27-steroid + reduced [NADPH--hemoprotein reductase] + O2 = a (22S)-22-hydroxy C27-steroid + oxidized [NADPH--hemoprotein reductase] + H2O + H(+). The catalysed reaction is a C28-steroid + reduced [NADPH--hemoprotein reductase] + O2 = a (22S)-22-hydroxy C28-steroid + oxidized [NADPH--hemoprotein reductase] + H2O + H(+). The enzyme catalyses a C29-steroid + reduced [NADPH--hemoprotein reductase] + O2 = a (22S)-22-hydroxy C29-steroid + oxidized [NADPH--hemoprotein reductase] + H2O + H(+). It carries out the reaction cholesterol + reduced [NADPH--hemoprotein reductase] + O2 = (22S)-22-hydroxycholesterol + oxidized [NADPH--hemoprotein reductase] + H2O + H(+). It catalyses the reaction cholestanol + reduced [NADPH--hemoprotein reductase] + O2 = (22S)-22-hydroxycholestanol + oxidized [NADPH--hemoprotein reductase] + H2O + H(+). The catalysed reaction is campestanol + reduced [NADPH--hemoprotein reductase] + O2 = 6-deoxycathasterone + oxidized [NADPH--hemoprotein reductase] + H2O + H(+). The enzyme catalyses campesterol + reduced [NADPH--hemoprotein reductase] + O2 = (22S)-22-hydroxycampesterol + oxidized [NADPH--hemoprotein reductase] + H2O + H(+). It carries out the reaction 6-oxocampestanol + reduced [NADPH--hemoprotein reductase] + O2 = cathasterone + oxidized [NADPH--hemoprotein reductase] + H2O + H(+). It catalyses the reaction sitosterol + reduced [NADPH--hemoprotein reductase] + O2 = (22S)-22-hydroxysitosterol + oxidized [NADPH--hemoprotein reductase] + H2O + H(+). It participates in plant hormone biosynthesis; brassinosteroid biosynthesis. In terms of biological role, catalyzes the C22-alpha-hydroxylation step in brassinosteroids biosynthesis. Converts campesterol (CR) to (22S)-22-hydroxycampesterol (22-OHCR, 22-hydroxyCR), campestanol (CN) to 6-deoxycathasterone (6-deoxoCT), and 6-oxocampestanol (6-oxoCN) to cathasterone (CT). Can also use cholesterol and cholestanol as substrates. The polypeptide is Steroid (22S)-hydroxylase (Arabidopsis thaliana (Mouse-ear cress)).